The sequence spans 257 residues: Triosephosphate isomerase (257 aa).

Substrate is bound at residue 9–11 (NWK). His97 functions as the Electrophile in the catalytic mechanism. Glu169 functions as the Proton acceptor in the catalytic mechanism. Residues Gly175, Ser214, and 235-236 (GG) each bind substrate.

The protein belongs to the triosephosphate isomerase family. As to quaternary structure, homodimer.

The protein resides in the cytoplasm. The catalysed reaction is D-glyceraldehyde 3-phosphate = dihydroxyacetone phosphate. It functions in the pathway carbohydrate biosynthesis; gluconeogenesis. The protein operates within carbohydrate degradation; glycolysis; D-glyceraldehyde 3-phosphate from glycerone phosphate: step 1/1. Its function is as follows. Involved in the gluconeogenesis. Catalyzes stereospecifically the conversion of dihydroxyacetone phosphate (DHAP) to D-glyceraldehyde-3-phosphate (G3P). In Vibrio cholerae serotype O1 (strain ATCC 39315 / El Tor Inaba N16961), this protein is Triosephosphate isomerase.